The chain runs to 305 residues: 4-diphosphocytidyl-2-C-methyl-D-erythritol kinase (305 aa).

Lys-10 is an active-site residue. 95–105 (PVTAGLGGGSS) lines the ATP pocket. Asp-136 is a catalytic residue. The interval 286–305 (PGVTPWRSPRSASSPSTKRS) is disordered. Residues 290–305 (PWRSPRSASSPSTKRS) are compositionally biased toward low complexity.

The protein belongs to the GHMP kinase family. IspE subfamily.

The enzyme catalyses 4-CDP-2-C-methyl-D-erythritol + ATP = 4-CDP-2-C-methyl-D-erythritol 2-phosphate + ADP + H(+). It functions in the pathway isoprenoid biosynthesis; isopentenyl diphosphate biosynthesis via DXP pathway; isopentenyl diphosphate from 1-deoxy-D-xylulose 5-phosphate: step 3/6. Its function is as follows. Catalyzes the phosphorylation of the position 2 hydroxy group of 4-diphosphocytidyl-2C-methyl-D-erythritol. This chain is 4-diphosphocytidyl-2-C-methyl-D-erythritol kinase, found in Anaeromyxobacter sp. (strain Fw109-5).